The following is a 317-amino-acid chain: Transaldolase (317 aa).

The active-site Schiff-base intermediate with substrate is the Lys-132.

It belongs to the transaldolase family. Type 1 subfamily. Homodimer.

The protein localises to the cytoplasm. It carries out the reaction D-sedoheptulose 7-phosphate + D-glyceraldehyde 3-phosphate = D-erythrose 4-phosphate + beta-D-fructose 6-phosphate. Its pathway is carbohydrate degradation; pentose phosphate pathway; D-glyceraldehyde 3-phosphate and beta-D-fructose 6-phosphate from D-ribose 5-phosphate and D-xylulose 5-phosphate (non-oxidative stage): step 2/3. Transaldolase is important for the balance of metabolites in the pentose-phosphate pathway. This Haemophilus influenzae (strain PittEE) protein is Transaldolase.